The following is a 546-amino-acid chain: Chaperonin GroEL (546 aa).

ATP contacts are provided by residues 30 to 33, Lys51, 87 to 91, Gly415, 479 to 481, and Asp495; these read TLGP, DGTTT, and NAA. Residues 527-546 are disordered; it reads DKPAAPPMPGGMGGMGGMDF. Residues 536 to 546 are compositionally biased toward gly residues; it reads GGMGGMGGMDF.

Belongs to the chaperonin (HSP60) family. Forms a cylinder of 14 subunits composed of two heptameric rings stacked back-to-back. Interacts with the co-chaperonin GroES.

Its subcellular location is the cytoplasm. It catalyses the reaction ATP + H2O + a folded polypeptide = ADP + phosphate + an unfolded polypeptide.. In terms of biological role, together with its co-chaperonin GroES, plays an essential role in assisting protein folding. The GroEL-GroES system forms a nano-cage that allows encapsulation of the non-native substrate proteins and provides a physical environment optimized to promote and accelerate protein folding. The sequence is that of Chaperonin GroEL from Bordetella petrii (strain ATCC BAA-461 / DSM 12804 / CCUG 43448).